We begin with the raw amino-acid sequence, 1040 residues long: Multidrug resistance protein MdtB (1040 aa).

12 helical membrane passes run 16–36 (FIMR…AGII), 347–367 (LMMA…NIPA), 369–389 (IIPG…MVFL), 396–416 (LTLM…IVVI), 440–460 (IGFT…PLLF), 472–492 (FAIT…TLTP), 537–557 (WLTL…WVFI), 863–883 (LGST…VLGI), 888–908 (FIHP…ALLA), 911–931 (IAGS…IGIV), 968–988 (ILMT…STGV), and 998–1018 (IGMV…TPVI).

It belongs to the resistance-nodulation-cell division (RND) (TC 2.A.6) family. MdtB subfamily. Part of a tripartite efflux system composed of MdtA, MdtB and MdtC. MdtB forms a heteromultimer with MdtC.

Its subcellular location is the cell inner membrane. Functionally, the MdtABC tripartite complex confers resistance against novobiocin and deoxycholate. The polypeptide is Multidrug resistance protein MdtB (Escherichia coli O45:K1 (strain S88 / ExPEC)).